A 262-amino-acid chain; its full sequence is MQPDLLSRKTAALTLQKFHTLSPLTHCMTNDVVQTFTANTLLALGASPAMVIETEEASQFAAVASALLINVGTLTQARAHAMRAAVVHAKRVKTPWTLDPVAVGSLDYRRHFCTELLSLNPDAIRGNASEIMALAGVSNSGRGVDSTDVVANALPAAVMLAQETGAVVVVTGEVDYVTDGRRTVGVGGGDPLMTKVVGTGCALSAVVAACCALPGDRLLNVASACSWMKQAGERAIVRSQGPGTFVPYFLDALWQMTQEVEA.

Position 50 (M50) interacts with substrate. 2 residues coordinate ATP: R125 and T171. A substrate-binding site is contributed by G198.

This sequence belongs to the Thz kinase family. The cofactor is Mg(2+).

It carries out the reaction 5-(2-hydroxyethyl)-4-methylthiazole + ATP = 4-methyl-5-(2-phosphooxyethyl)-thiazole + ADP + H(+). It functions in the pathway cofactor biosynthesis; thiamine diphosphate biosynthesis; 4-methyl-5-(2-phosphoethyl)-thiazole from 5-(2-hydroxyethyl)-4-methylthiazole: step 1/1. Its function is as follows. Catalyzes the phosphorylation of the hydroxyl group of 4-methyl-5-beta-hydroxyethylthiazole (THZ). The chain is Hydroxyethylthiazole kinase from Escherichia fergusonii (strain ATCC 35469 / DSM 13698 / CCUG 18766 / IAM 14443 / JCM 21226 / LMG 7866 / NBRC 102419 / NCTC 12128 / CDC 0568-73).